Consider the following 319-residue polypeptide: Curved DNA-binding protein (319 aa).

The J domain occupies 5–69 (DYYKILGVEP…QKRAEFDEIR (65 aa)).

The protein localises to the cytoplasm. Its subcellular location is the nucleoid. DNA-binding protein that preferentially recognizes a curved DNA sequence. It is probably a functional analog of DnaJ; displays overlapping activities with DnaJ, but functions under different conditions, probably acting as a molecular chaperone in an adaptive response to environmental stresses other than heat shock. Lacks autonomous chaperone activity; binds native substrates and targets them for recognition by DnaK. Its activity is inhibited by the binding of CbpM. The chain is Curved DNA-binding protein from Pseudomonas putida (strain ATCC 700007 / DSM 6899 / JCM 31910 / BCRC 17059 / LMG 24140 / F1).